The sequence spans 287 residues: MPENVSLIRNRTEVGQGRAWGSGAGARPAWVVMVLAGVLIFTSVVDVLGNVLVIISVLRNRKLRNAGNAFVVSLAFADLLVVCYPYPLVLHAMLHAGWLPGEMECKVSGFLMGASVIGSIFNITAIAINRYCFICQANTYEKIYGRAGTLVLLTLVWVLTAIAILPNLSLGSLTYDPRVYSCTFSQTTSAGYTIAVVTVHFLLPIAVVTFCYLRIWVLVLRVRRRVTTDVRPRLRPSELRHFLTMFVVFVLFAVCWAPLNLIGLAVAVDPPRVGPLVPDWLFVMSYF.

Residues 1–28 (MPENVSLIRNRTEVGQGRAWGSGAGARP) lie on the Extracellular side of the membrane. Asparagine 4 and asparagine 10 each carry an N-linked (GlcNAc...) asparagine glycan. The helical transmembrane segment at 29–49 (AWVVMVLAGVLIFTSVVDVLG) threads the bilayer. Over 50–69 (NVLVIISVLRNRKLRNAGNA) the chain is Cytoplasmic. The chain crosses the membrane as a helical span at residues 70 to 90 (FVVSLAFADLLVVCYPYPLVL). The Extracellular portion of the chain corresponds to 91–107 (HAMLHAGWLPGEMECKV). The cysteines at positions 105 and 182 are disulfide-linked. The chain crosses the membrane as a helical span at residues 108-128 (SGFLMGASVIGSIFNITAIAI). At 129 to 149 (NRYCFICQANTYEKIYGRAGT) the chain is on the cytoplasmic side. Residues 150 to 170 (LVLLTLVWVLTAIAILPNLSL) form a helical membrane-spanning segment. Residues 171–192 (GSLTYDPRVYSCTFSQTTSAGY) lie on the Extracellular side of the membrane. Residues 193 to 213 (TIAVVTVHFLLPIAVVTFCYL) traverse the membrane as a helical segment. At 214–245 (RIWVLVLRVRRRVTTDVRPRLRPSELRHFLTM) the chain is on the cytoplasmic side. The chain crosses the membrane as a helical span at residues 246–266 (FVVFVLFAVCWAPLNLIGLAV). Topologically, residues 267 to 275 (AVDPPRVGP) are extracellular. A helical transmembrane segment spans residues 276–287 (LVPDWLFVMSYF).

Belongs to the G-protein coupled receptor 1 family.

Its subcellular location is the cell membrane. Its function is as follows. High affinity receptor for melatonin. The activity of this receptor is mediated by pertussis toxin sensitive G proteins that inhibits adenylate cyclase activity. The sequence is that of Melatonin receptor type 1B-A (mtnr1ba) from Danio rerio (Zebrafish).